A 663-amino-acid polypeptide reads, in one-letter code: Dual specificity protein phosphatase 8 (663 aa).

The region spanning 23 to 138 (GPGGPLVIDS…FSSCFPGLCE (116 aa)) is the Rhodanese domain. The Tyrosine-protein phosphatase domain maps to 160-302 (GLTRILPHLY…LLEYERSLKL (143 aa)). Cys246 functions as the Phosphocysteine intermediate in the catalytic mechanism. 2 disordered regions span residues 313–367 (LGTP…STAP) and 404–624 (YAPS…FKRR). Low complexity-rich tracts occupy residues 334–353 (STSE…REGS), 427–448 (LDSP…PDSV), and 546–557 (SAGAPGPGNSSS). Residues 558 to 577 (SGGGGGGGGGGGGGGGGGGS) are compositionally biased toward gly residues. The segment covering 578–600 (SSSNSSSSSSSSSSSSSSSSSSS) has biased composition (low complexity).

It belongs to the protein-tyrosine phosphatase family. Non-receptor class dual specificity subfamily. Monomer. Expressed predominantly in brain and lung.

The protein localises to the cytoplasm. It is found in the nucleus. It catalyses the reaction O-phospho-L-tyrosyl-[protein] + H2O = L-tyrosyl-[protein] + phosphate. The enzyme catalyses O-phospho-L-seryl-[protein] + H2O = L-seryl-[protein] + phosphate. It carries out the reaction O-phospho-L-threonyl-[protein] + H2O = L-threonyl-[protein] + phosphate. Its function is as follows. Has phosphatase activity with synthetic phosphatase substrates and negatively regulates mitogen-activated protein kinase activity, presumably by catalysing their dephosphorylation. Expected to display protein phosphatase activity toward phosphotyrosine, phosphoserine and phosphothreonine residues. The sequence is that of Dual specificity protein phosphatase 8 (Dusp8) from Mus musculus (Mouse).